An 89-amino-acid chain; its full sequence is Strongylocin 2 (89 aa).

A signal peptide spans 1 to 22 (MNIRTASFTFIVVMMILSQTMA). A propeptide spanning residues 23 to 38 (DRFFNEPEEDDHLVES) is cleaved from the precursor. The residue at position 39 (Trp-39) is a 6'-bromotryptophan.

Post-translationally, contains 3 disulfide bonds.

Its function is as follows. Has antimicrobial activity against Gram-negative bacteria and Gram-positive bacteria with minimum inhibitory concentration (MIC) between 0.78 uM and 3.13 uM. This is Strongylocin 2 from Echinus esculentus (Sea urchin).